The sequence spans 515 residues: Glucose-6-phosphate 1-dehydrogenase (515 aa).

NADP(+) is bound by residues Arg53 and Lys160. Residues His190, Lys194, Glu228, and Asp247 each coordinate substrate. His252 serves as the catalytic Proton acceptor. Position 352 (Lys352) interacts with substrate.

It belongs to the glucose-6-phosphate dehydrogenase family.

It catalyses the reaction D-glucose 6-phosphate + NADP(+) = 6-phospho-D-glucono-1,5-lactone + NADPH + H(+). The protein operates within carbohydrate degradation; pentose phosphate pathway; D-ribulose 5-phosphate from D-glucose 6-phosphate (oxidative stage): step 1/3. Catalyzes the oxidation of glucose 6-phosphate to 6-phosphogluconolactone. The chain is Glucose-6-phosphate 1-dehydrogenase from Treponema pallidum (strain Nichols).